The chain runs to 610 residues: Menin (610 aa).

The interaction with FANCD2 stretch occupies residues 214–390 (GVAERSWLYL…SLLEAGEERP (177 aa)). Disordered regions lie at residues 385–404 (AGEE…GSAL) and 460–552 (REAE…PVLT). Residues 393–402 (QTQGTQSQGS) show a composition bias toward low complexity. Residues 484–500 (RRESKPEEPPPPKKPAL) are compositionally biased toward basic and acidic residues. Ser487 carries the post-translational modification Phosphoserine. Composition is skewed to pro residues over residues 512 to 521 (PGPPRKPPGT) and 537 to 548 (VPAPAASPPPEG). At Ser543 the chain carries Phosphoserine. Thr594 carries the post-translational modification Phosphothreonine.

Component of the MLL-HCF complex, at least composed of KMT2A/MLL1, MEN1, ASH2L, RBBP5, DPY30, WDR5, HCFC1 and HCFC2. Component of the menin-associated histone methyltransferase complex, at least composed of KMT2B/MLL4, MEN1, ASH2L, RBBP5, DPY30 and WDR5. Interacts with POLR2B. Interacts with POLR2A phosphorylated at 'Ser-5', but not with the unphosphorylated, nor 'Ser-2' phosphorylated POLR2A forms. Interacts with FANCD2 and DBF4. Interacts with SMAD3, but not with SMAD2, nor SMAD4. Directly interacts with NFKB1, NFKB2 and RELA. Interacts with JUND (via MBM motif); inhibits the interaction of JUND with MAPK10 and the phosphorylation of JUND by MAP kinases MAPK8 and MAPK10. Interacts with KMT2A (via MBM motif). The KMT2A-MEN1 complex interacts with PSIP1 with a greater affinity as MEN1 enhances interaction of KMT2A with PSIP1.

It localises to the nucleus. In terms of biological role, essential component of a MLL/SET1 histone methyltransferase (HMT) complex, a complex that specifically methylates 'Lys-4' of histone H3 (H3K4). Functions as a transcriptional regulator. Binds to the TERT promoter and represses telomerase expression. Plays a role in TGFB1-mediated inhibition of cell-proliferation, possibly regulating SMAD3 transcriptional activity. Represses JUND-mediated transcriptional activation on AP1 sites, as well as that mediated by NFKB subunit RELA. Positively regulates HOXC8 and HOXC6 gene expression. May be involved in normal hematopoiesis through the activation of HOXA9 expression. May be involved in DNA repair. In Bos taurus (Bovine), this protein is Menin (MEN1).